Here is a 282-residue protein sequence, read N- to C-terminus: Elongation factor Ts (282 aa).

Residues 80–83 (TDFV) form an involved in Mg(2+) ion dislocation from EF-Tu region.

This sequence belongs to the EF-Ts family.

It is found in the cytoplasm. In terms of biological role, associates with the EF-Tu.GDP complex and induces the exchange of GDP to GTP. It remains bound to the aminoacyl-tRNA.EF-Tu.GTP complex up to the GTP hydrolysis stage on the ribosome. In Chlamydia trachomatis serovar A (strain ATCC VR-571B / DSM 19440 / HAR-13), this protein is Elongation factor Ts.